Reading from the N-terminus, the 129-residue chain is MSSQPSKDLETFENPQPGRDYTIRIRVPEFTCLCPKTGQPDFATLFLDYVPRARCVELKSLKLYVWAFRDQGAFHEKVTNEILNDLVAATDPNFMRLTAEFNVRGGVYTTVVAEHRHPDWQPPVPVTLP.

C34 acts as the Thioimide intermediate in catalysis. The active-site Proton donor is the D41. Residues 56–58 (VEL) and 75–76 (HE) contribute to the substrate site.

The protein belongs to the GTP cyclohydrolase I family. QueF type 1 subfamily.

It localises to the cytoplasm. It catalyses the reaction 7-aminomethyl-7-carbaguanine + 2 NADP(+) = 7-cyano-7-deazaguanine + 2 NADPH + 3 H(+). It participates in tRNA modification; tRNA-queuosine biosynthesis. Its function is as follows. Catalyzes the NADPH-dependent reduction of 7-cyano-7-deazaguanine (preQ0) to 7-aminomethyl-7-deazaguanine (preQ1). This is NADPH-dependent 7-cyano-7-deazaguanine reductase from Thioalkalivibrio sulfidiphilus (strain HL-EbGR7).